Consider the following 631-residue polypeptide: Shootin-1 (631 aa).

Met-1 bears the N-acetylmethionine mark. Ser-3 and Ser-4 each carry phosphoserine. The stretch at 7–353 (EKQLQLITSL…RVNQSENSVP (347 aa)) forms a coiled coil. Ser-101 bears the Phosphoserine; by PAK1 mark. Ser-249 carries the post-translational modification Phosphoserine. 2 disordered regions span residues 343-404 (KRVN…EVTD) and 417-508 (IKKG…KSMP). Residues 352-369 (VPPPPPPPPPLPPPPPNP) are compositionally biased toward pro residues. Residue Ser-375 is modified to Phosphoserine. Residues 456-465 (LNKSTSSRSL) show a composition bias toward polar residues. A Phosphoserine modification is found at Ser-473. Thr-487 carries the post-translational modification Phosphothreonine. Positions 490 to 505 (ADSSSPTGILATSESK) are enriched in polar residues. Ser-494 carries the phosphoserine modification. At Thr-496 the chain carries Phosphothreonine. Phosphoserine is present on residues Ser-506 and Ser-515. Residues 530–631 (FNNPCPLTPE…KTGETDSSNC (102 aa)) form a disordered region. Phosphothreonine is present on Thr-537. Over residues 590 to 602 (PQTKDQAAEKDPT) the composition is skewed to basic and acidic residues.

It belongs to the shootin family. Interacts with L1CAM; this interaction occurs at axonal growth cones. Interacts with actin filament retrograde flow; this interaction is enhanced in a netrin-1- and PAK1-dependent manner and promotes F-actin-substrate coupling and concomitant formation of traction forces at axonal growth cones. Interacts with RUFY3. Interacts with PFN2. Interacts (via N-terminus) with KIF20B; this interaction is direct and promotes the association of SHTN1 to microtubules in primary neurons. Associates with microtubule. Post-translationally, phosphorylated on Ser-101 and Ser-249 by PAK1 through a CDC42- and RAC1-dependent signaling pathway, which enhances its association with F-actin retrograde flow in filopodia and lamellipodia of axonal growth cones. Phosphorylation on Ser-101 and Ser-249 is increased by netrin-1. As to expression, expressed in hippocampal neurons.

Its subcellular location is the perikaryon. The protein resides in the cell projection. It localises to the axon. It is found in the growth cone. The protein localises to the cytoplasm. Its subcellular location is the cytoskeleton. The protein resides in the filopodium. It localises to the lamellipodium. Involved in the generation of internal asymmetric signals required for neuronal polarization and neurite outgrowth. Mediates netrin-1-induced F-actin-substrate coupling or 'clutch engagement' within the axon growth cone through activation of CDC42, RAC1 and PAK1-dependent signaling pathway, thereby converting the F-actin retrograde flow into traction forces, concomitantly with filopodium extension and axon outgrowth. Plays a role in cytoskeletal organization by regulating the subcellular localization of phosphoinositide 3-kinase (PI3K) activity at the axonal growth cone. Also plays a role in regenerative neurite outgrowth. In the developing cortex, cooperates with KIF20B to promote both the transition from the multipolar to the bipolar stage and the radial migration of cortical neurons from the ventricular zone toward the superficial layer of the neocortex. Involved in the accumulation of phosphatidylinositol 3,4,5-trisphosphate (PIP3) in the growth cone of primary hippocampal neurons. The sequence is that of Shootin-1 from Mus musculus (Mouse).